The following is a 463-amino-acid chain: Metalloprotease slr0863 (463 aa).

The protein belongs to the peptidase U62 family.

Its function is as follows. Probable metalloprotease. This is Metalloprotease slr0863 from Synechocystis sp. (strain ATCC 27184 / PCC 6803 / Kazusa).